The chain runs to 143 residues: Small ribosomal subunit protein uS9 (143 aa).

N-acetylserine is present on S2. The segment at 123 to 143 is disordered; the sequence is MPEPKKFGGKGARSRYQKSYR. Over residues 134–143 the composition is skewed to basic residues; that stretch reads ARSRYQKSYR.

The protein belongs to the universal ribosomal protein uS9 family.

The chain is Small ribosomal subunit protein uS9 (RPS16) from Maudiozyma exigua (Yeast).